Here is a 281-residue protein sequence, read N- to C-terminus: E3 ubiquitin-protein ligase MARCHF5 (281 aa).

An RING-CH-type zinc finger spans residues Leu-9–Val-78. Residues Cys-17, Cys-20, Cys-36, Cys-38, His-46, Cys-49, Cys-68, and Cys-71 each coordinate Zn(2+). A run of 4 helical transmembrane segments spans residues Phe-102 to Val-122, Pro-142 to Ile-162, Ile-212 to Ser-232, and Thr-241 to Gln-261.

It localises to the mitochondrion outer membrane. The protein localises to the endoplasmic reticulum membrane. It carries out the reaction S-ubiquitinyl-[E2 ubiquitin-conjugating enzyme]-L-cysteine + [acceptor protein]-L-lysine = [E2 ubiquitin-conjugating enzyme]-L-cysteine + N(6)-ubiquitinyl-[acceptor protein]-L-lysine.. The protein operates within protein modification; protein ubiquitination. Its function is as follows. Mitochondrial E3 ubiquitin-protein ligase that plays a crucial role in the control of mitochondrial morphology by acting as a positive regulator of mitochondrial fission. May play a role in the prevention of cell senescence acting as a regulator of mitochondrial quality control. This Gallus gallus (Chicken) protein is E3 ubiquitin-protein ligase MARCHF5 (MARCHF5).